The sequence spans 198 residues: Holliday junction branch migration complex subunit RuvA (198 aa).

The domain I stretch occupies residues 1-63 (MIAYLSGAVR…EDAQLLFGFL (63 aa)). Positions 64-142 (DTDSLRLFDL…EHLAAGAPVS (79 aa)) are domain II. The tract at residues 143–150 (AGKAALTS) is flexible linker. A domain III region spans residues 150–198 (STAGRDAIEALLALGFREPQVRSVVAELLAADPEQSADALIRKGLGKLR).

It belongs to the RuvA family. As to quaternary structure, homotetramer. Forms an RuvA(8)-RuvB(12)-Holliday junction (HJ) complex. HJ DNA is sandwiched between 2 RuvA tetramers; dsDNA enters through RuvA and exits via RuvB. An RuvB hexamer assembles on each DNA strand where it exits the tetramer. Each RuvB hexamer is contacted by two RuvA subunits (via domain III) on 2 adjacent RuvB subunits; this complex drives branch migration. In the full resolvosome a probable DNA-RuvA(4)-RuvB(12)-RuvC(2) complex forms which resolves the HJ.

Its subcellular location is the cytoplasm. In terms of biological role, the RuvA-RuvB-RuvC complex processes Holliday junction (HJ) DNA during genetic recombination and DNA repair, while the RuvA-RuvB complex plays an important role in the rescue of blocked DNA replication forks via replication fork reversal (RFR). RuvA specifically binds to HJ cruciform DNA, conferring on it an open structure. The RuvB hexamer acts as an ATP-dependent pump, pulling dsDNA into and through the RuvAB complex. HJ branch migration allows RuvC to scan DNA until it finds its consensus sequence, where it cleaves and resolves the cruciform DNA. In Deinococcus geothermalis (strain DSM 11300 / CIP 105573 / AG-3a), this protein is Holliday junction branch migration complex subunit RuvA.